Consider the following 40-residue polypeptide: Photosystem II reaction center protein J (40 aa).

Residues 8–28 form a helical membrane-spanning segment; the sequence is IPLWLIGTVVGTPVISLVGIF.

It belongs to the PsbJ family. In terms of assembly, PSII is composed of 1 copy each of membrane proteins PsbA, PsbB, PsbC, PsbD, PsbE, PsbF, PsbH, PsbI, PsbJ, PsbK, PsbL, PsbM, PsbT, PsbX, PsbY, PsbZ, Psb30/Ycf12, at least 3 peripheral proteins of the oxygen-evolving complex and a large number of cofactors. It forms dimeric complexes.

The protein resides in the plastid. It is found in the chloroplast thylakoid membrane. One of the components of the core complex of photosystem II (PSII). PSII is a light-driven water:plastoquinone oxidoreductase that uses light energy to abstract electrons from H(2)O, generating O(2) and a proton gradient subsequently used for ATP formation. It consists of a core antenna complex that captures photons, and an electron transfer chain that converts photonic excitation into a charge separation. The chain is Photosystem II reaction center protein J from Huperzia lucidula (Shining clubmoss).